The chain runs to 1043 residues: Phosphatidylinositol 4,5-bisphosphate 3-kinase catalytic subunit delta isoform (1043 aa).

The region spanning 16 to 105 (ESQSVVVDFL…LPVLRLVARE (90 aa)) is the PI3K-ABD domain. In terms of domain architecture, PI3K-RBD spans 187–278 (NRALLVNVKF…GLTPHLTMVH (92 aa)). A disordered region spans residues 287–312 (DEQSNPAPQVQKPRAKPPPIPAKKPS). The region spanning 319–476 (LEQPFSIELI…SAAALVIYLP (158 aa)) is the C2 PI3K-type domain. Residues 496 to 673 (RHGERGRITE…GLIMEAYCRG (178 aa)) form the PIK helical domain. Y523 carries the post-translational modification Phosphotyrosine. The 283-residue stretch at 744 to 1026 (CVEQCTFMDS…KFNEALRESW (283 aa)) folds into the PI3K/PI4K catalytic domain. The segment at 750–756 (FMDSKMK) is G-loop. The interval 889–897 (GIGDRHSDN) is catalytic loop. The tract at residues 908–934 (HIDFGHFLGNFKTKFGINRERVPFILT) is activation loop. Position 1038 is a phosphoserine; by autocatalysis (S1038).

It belongs to the PI3/PI4-kinase family. As to quaternary structure, heterodimer of a catalytic subunit PIK3CD and a p85 regulatory subunit (PIK3R1, PIK3R2 or PIK3R3). Interacts with ERAS and HRAS. Post-translationally, autophosphorylation on Ser-1038 results in the almost complete inactivation of the lipid kinase activity. In terms of tissue distribution, abundantly expressed in adult mouse spleen as well as in testis. Isoform 1 is expressed in spleen and lung (at protein level). Isoform 1 is expressed predominantly in leukocytes.

The protein localises to the cytoplasm. It catalyses the reaction a 1,2-diacyl-sn-glycero-3-phospho-(1D-myo-inositol-4,5-bisphosphate) + ATP = a 1,2-diacyl-sn-glycero-3-phospho-(1D-myo-inositol-3,4,5-trisphosphate) + ADP + H(+). The enzyme catalyses a 1,2-diacyl-sn-glycero-3-phospho-(1D-myo-inositol) + ATP = a 1,2-diacyl-sn-glycero-3-phospho-(1D-myo-inositol-3-phosphate) + ADP + H(+). The catalysed reaction is 1-octadecanoyl-2-(5Z,8Z,11Z,14Z)-eicosatetraenoyl-sn-glycero-3-phospho-1D-myo-inositol 4,5-bisphosphate + ATP = 1-octadecanoyl-2-(5Z,8Z,11Z,14Z-eicosatetraenoyl)-sn-glycero-3-phospho-(1D-myo-inositol 3,4,5-triphosphate) + ADP + H(+). The protein operates within phospholipid metabolism; phosphatidylinositol phosphate biosynthesis. Its activity is regulated as follows. Activated by growth factors and cytokine receptors through a tyrosine-kinase-dependent mechanism. Activated by RAS. IC87114 inhibits lipid kinase activity and is selective in cells at doses up to 5-10 uM. Among other effects, IC87114 reduces allergic responses, prevents the recruitment of antigen-specific T cells into target tissue, and affects natural killer cell chemotaxis. Functionally, phosphoinositide-3-kinase (PI3K) phosphorylates phosphatidylinositol (PI) and its phosphorylated derivatives at position 3 of the inositol ring to produce 3-phosphoinositides. Uses ATP and PtdIns(4,5)P2 (phosphatidylinositol 4,5-bisphosphate) to generate phosphatidylinositol 3,4,5-trisphosphate (PIP3). PIP3 plays a key role by recruiting PH domain-containing proteins to the membrane, including AKT1 and PDPK1, activating signaling cascades involved in cell growth, survival, proliferation, motility and morphology. Mediates immune responses. Plays a role in B-cell development, proliferation, migration, and function. Required for B-cell receptor (BCR) signaling. Mediates B-cell proliferation response to anti-IgM, anti-CD40 and IL4 stimulation. Promotes cytokine production in response to TLR4 and TLR9. Required for antibody class switch mediated by TLR9. Involved in the antigen presentation function of B-cells. Involved in B-cell chemotaxis in response to CXCL13 and sphingosine 1-phosphate (S1P). Required for proliferation, signaling and cytokine production of naive, effector and memory T-cells. Required for T-cell receptor (TCR) signaling. Mediates TCR signaling events at the immune synapse. Activation by TCR leads to antigen-dependent memory T-cell migration and retention to antigenic tissues. Together with PIK3CG participates in T-cell development. Contributes to T-helper cell expansion and differentiation. Required for T-cell migration mediated by homing receptors SELL/CD62L, CCR7 and S1PR1 and antigen dependent recruitment of T-cells. Together with PIK3CG is involved in natural killer (NK) cell development and migration towards the sites of inflammation. Participates in NK cell receptor activation. Plays a role in NK cell maturation and cytokine production. Together with PIK3CG is involved in neutrophil chemotaxis and extravasation. Together with PIK3CG participates in neutrophil respiratory burst. Plays important roles in mast-cell development and mast cell mediated allergic response. Involved in stem cell factor (SCF)-mediated proliferation, adhesion and migration. Required for allergen-IgE-induced degranulation and cytokine release. The lipid kinase activity is required for its biological function. This is Phosphatidylinositol 4,5-bisphosphate 3-kinase catalytic subunit delta isoform (Pik3cd) from Mus musculus (Mouse).